A 399-amino-acid chain; its full sequence is Argininosuccinate synthase (399 aa).

A9–S17 provides a ligand contact to ATP. L-citrulline is bound at residue Y88. G118 is an ATP binding site. The L-aspartate site is built by T120, N124, and D125. Position 124 (N124) interacts with L-citrulline. 4 residues coordinate L-citrulline: R128, S176, E261, and Y273.

It belongs to the argininosuccinate synthase family. Type 1 subfamily. Homotetramer.

Its subcellular location is the cytoplasm. It catalyses the reaction L-citrulline + L-aspartate + ATP = 2-(N(omega)-L-arginino)succinate + AMP + diphosphate + H(+). It participates in amino-acid biosynthesis; L-arginine biosynthesis; L-arginine from L-ornithine and carbamoyl phosphate: step 2/3. The polypeptide is Argininosuccinate synthase (Mycobacterium leprae (strain TN)).